A 361-amino-acid polypeptide reads, in one-letter code: 3-dehydroquinate synthase (361 aa).

NAD(+) is bound by residues 104-108 (GVIGD), 128-129 (TT), Lys141, Lys150, and 168-171 (FLRT). Zn(2+) contacts are provided by Glu183, His246, and His263.

The protein belongs to the sugar phosphate cyclases superfamily. Dehydroquinate synthase family. It depends on Co(2+) as a cofactor. Requires Zn(2+) as cofactor. NAD(+) is required as a cofactor.

It localises to the cytoplasm. It catalyses the reaction 7-phospho-2-dehydro-3-deoxy-D-arabino-heptonate = 3-dehydroquinate + phosphate. Its pathway is metabolic intermediate biosynthesis; chorismate biosynthesis; chorismate from D-erythrose 4-phosphate and phosphoenolpyruvate: step 2/7. Catalyzes the conversion of 3-deoxy-D-arabino-heptulosonate 7-phosphate (DAHP) to dehydroquinate (DHQ). The polypeptide is 3-dehydroquinate synthase (Opitutus terrae (strain DSM 11246 / JCM 15787 / PB90-1)).